Here is a 688-residue protein sequence, read N- to C-terminus: Protein SDA1 homolog (688 aa).

A phosphoserine mark is found at S232, S234, and S236. Positions 254–318 (KKSSKNKKKL…ERFEVKMMLM (65 aa)) form a coiled coil. The span at 484-498 (VENEEENAEGDEDGW) shows a compositional bias: acidic residues. Residues 484 to 524 (VENEEENAEGDEDGWESASLSDEADSDGEWVDVHHSSDEEQ) form a disordered region. Over residues 514–524 (VDVHHSSDEEQ) the composition is skewed to basic and acidic residues. Phosphoserine is present on residues S586 and S596. A disordered region spans residues 605–688 (KKPKSDKETR…ALLKKRKRMK (84 aa)). The segment covering 668–681 (SFREKQLALRDALL) has biased composition (basic and acidic residues).

It belongs to the SDA1 family.

The protein localises to the nucleus. It localises to the nucleolus. In terms of biological role, required for 60S pre-ribosomal subunits export to the cytoplasm. The polypeptide is Protein SDA1 homolog (SDAD1) (Bos taurus (Bovine)).